The sequence spans 530 residues: Probable NADH-specific resorcinol 4-hydroxylase (530 aa).

The enzyme catalyses resorcinol + NADH + O2 + H(+) = benzene-1,2,4-triol + NAD(+) + H2O. In terms of biological role, single-component hydroxylase that is part of the gamma-resorcylate (GRA) degradation pathway. GRA is initially converted by GRA decarboxylase to resorcinol, which is hydroxylated by resorcinol 4-hydroxylase. This chain is Probable NADH-specific resorcinol 4-hydroxylase (tsdB), found in Rhodococcus jostii (strain RHA1).